Here is a 713-residue protein sequence, read N- to C-terminus: BBSome complex assembly protein BBS10 (713 aa).

It belongs to the TCP-1 chaperonin family. In terms of assembly, component of a complex composed at least of MKKS, BBS10, BBS12, TCP1, CCT2, CCT3, CCT4, CCT5 and CCT8.

It localises to the cell projection. It is found in the cilium. In terms of biological role, probable molecular chaperone that assists the folding of proteins upon ATP hydrolysis. Plays a role in the assembly of BBSome, a complex involved in ciliogenesis regulating transports vesicles to the cilia. Involved in adipogenic differentiation. The sequence is that of BBSome complex assembly protein BBS10 (Bbs10) from Mus musculus (Mouse).